The chain runs to 190 residues: Translation initiation factor IF-3 (190 aa).

The segment at 159-190 (QSEVQQKPKREGRNMIMFLSPRKSPLIKKDNE) is disordered.

This sequence belongs to the IF-3 family. Monomer.

Its subcellular location is the cytoplasm. In terms of biological role, IF-3 binds to the 30S ribosomal subunit and shifts the equilibrium between 70S ribosomes and their 50S and 30S subunits in favor of the free subunits, thus enhancing the availability of 30S subunits on which protein synthesis initiation begins. The protein is Translation initiation factor IF-3 of Prochlorococcus marinus (strain MIT 9215).